Here is a 167-residue protein sequence, read N- to C-terminus: Myelin basic protein (167 aa).

Ala-1 is modified (N-acetylalanine). A phosphoserine mark is found at Ser-7 and Ser-12. Tyr-14 carries the post-translational modification Phosphotyrosine. The residue at position 17 (Thr-17) is a Phosphothreonine. Phosphoserine is present on Ser-19. A Phosphothreonine modification is found at Thr-20. Citrulline occurs at positions 25 and 31. A Phosphothreonine modification is found at Thr-35. At Ser-40 the chain carries Phosphoserine. Omega-N-methylarginine occurs at positions 43 and 49. The segment at 45-87 (FGSDRAAPKRGSGKDSHHAARTTHYGSLPQKSQRSQDENPVVH) is induces experimental autoimmune encephalomyelitis (EAE) 1. Residues 46–114 (GSDRAAPKRG…GRGLSLSRFS (69 aa)) are disordered. Ser-56 is modified (phosphoserine). Thr-67 is modified (phosphothreonine). Position 69 is a phosphotyrosine (Tyr-69). Ser-76 carries the phosphoserine modification. A phosphothreonine mark is found at Thr-94 and Thr-97. A Deamidated glutamine modification is found at Gln-102. Residue Arg-106 is modified to Omega-N-methylarginine; alternate. Arg-106 is subject to Symmetric dimethylarginine; alternate. Ser-114 bears the Phosphoserine mark. Residues 114–122 (SWGAEGQKP) form an induces experimental autoimmune encephalomyelitis (EAE) 2 region. An N6-acetyllysine modification is found at Lys-121. Arg-129 is subject to Citrulline. The disordered stretch occupies residues 136-167 (GFKGAHDAQGTLSKIFKLGGRDSRSGSPMARR). The residue at position 144 (Gln-144) is a Deamidated glutamine. The residue at position 156 (Arg-156) is a Citrulline. The residue at position 158 (Ser-158) is a Phosphoserine. The residue at position 162 (Ser-162) is a Phosphoserine; by UHMK1. Arg-167 is subject to Citrulline.

It belongs to the myelin basic protein family. In terms of assembly, homodimer. At least 5 charge isomers; C1 (the most cationic, least modified, and most abundant form), C2, C3, C4 and C5 (the least cationic form); are produced as a result of optional post-translational modifications such as phosphorylation of serine or threonine residues, deamidation of glutamine or asparagine residues, citrullination and methylation of arginine residues. C1 and C2 are unphosphorylated, C3 and C4 are monophosphorylated and C5 is phosphorylated at two positions. In terms of processing, phosphorylated by TAOK2, VRK2, MAPK11, MAPK12, MAPK14 and MINK1. Post-translationally, proteolytically cleaved in B cell lysosomes by cathepsin CTSG which degrades the major immunogenic MBP epitope and prevents the activation of MBP-specific autoreactive T cells. Found in both the central and the peripheral nervous system.

The protein resides in the myelin membrane. In terms of biological role, is, with PLP, the most abundant protein component of the myelin membrane in the CNS. Has a role in both the formation and stabilization of this compact multilayer arrangement of bilayers. Each splice variant and charge isomer may have a specialized function in the assembly of an optimized, biochemically functional myelin membrane. This chain is Myelin basic protein (MBP), found in Cavia porcellus (Guinea pig).